A 310-amino-acid polypeptide reads, in one-letter code: ADP-L-glycero-D-manno-heptose-6-epimerase (310 aa).

Residues Phe10–Ile11, Asp31–Asn32, Lys38, Lys53, Glu75–Ser79, and Asn92 contribute to the NADP(+) site. Tyr140 serves as the catalytic Proton acceptor. Lys144 provides a ligand contact to NADP(+). Asn169 is a substrate binding site. Residues Val170 and Lys178 each coordinate NADP(+). Lys178 (proton acceptor) is an active-site residue. Substrate is bound by residues Ser180, His187, Phe201–Ser204, Arg209, and Tyr272.

It belongs to the NAD(P)-dependent epimerase/dehydratase family. HldD subfamily. In terms of assembly, homopentamer. It depends on NADP(+) as a cofactor.

It carries out the reaction ADP-D-glycero-beta-D-manno-heptose = ADP-L-glycero-beta-D-manno-heptose. The protein operates within nucleotide-sugar biosynthesis; ADP-L-glycero-beta-D-manno-heptose biosynthesis; ADP-L-glycero-beta-D-manno-heptose from D-glycero-beta-D-manno-heptose 7-phosphate: step 4/4. In terms of biological role, catalyzes the interconversion between ADP-D-glycero-beta-D-manno-heptose and ADP-L-glycero-beta-D-manno-heptose via an epimerization at carbon 6 of the heptose. This Pectobacterium carotovorum subsp. carotovorum (strain PC1) protein is ADP-L-glycero-D-manno-heptose-6-epimerase.